We begin with the raw amino-acid sequence, 631 residues long: Dolichyl-diphosphooligosaccharide--protein glycosyltransferase subunit 2 (631 aa).

The first 22 residues, 1-22, serve as a signal peptide directing secretion; sequence MAPPGSSAVFLLALTITASVQA. At 23–540 the chain is on the lumenal side; it reads LTPTHYLTKQ…REPEKRPPTV (518 aa). Asparagine 106 is a glycosylation site (N-linked (GlcNAc...) asparagine). A Glycyl lysine isopeptide (Lys-Gly) (interchain with G-Cter in ubiquitin) cross-link involves residue lysine 154. A helical membrane pass occupies residues 541 to 561; it reads VSNTFTALILSPLLLLFALWI. The Cytoplasmic segment spans residues 562-571; that stretch reads RIGANVSNFT. Residues 572–592 form a helical membrane-spanning segment; the sequence is FAPSTVIFHLGHAAMLGLMYI. Residues 593 to 596 lie on the Lumenal side of the membrane; the sequence is YWTQ. A helical membrane pass occupies residues 597-617; sequence LNMFQTLKYLAVLGTVTFLAG. The Cytoplasmic portion of the chain corresponds to 618–631; that stretch reads NRMLAQHAVKRTAH.

Belongs to the SWP1 family. As to quaternary structure, component of the oligosaccharyltransferase (OST) complex. OST exists in two different complex forms which contain common core subunits RPN1, RPN2, OST48, OST4, DAD1 and TMEM258, either STT3A or STT3B as catalytic subunits, and form-specific accessory subunits. STT3A complex assembly occurs through the formation of 3 subcomplexes. Subcomplex 1 contains RPN1 and TMEM258, subcomplex 2 contains the STT3A-specific subunits STT3A, DC2/OSTC, and KCP2 as well as the core subunit OST4, and subcomplex 3 contains RPN2, DAD1, and OST48. The STT3A complex can form stable complexes with the Sec61 complex or with both the Sec61 and TRAP complexes. Interacts with DDI2. Interacts with TMEM35A/NACHO.

It is found in the endoplasmic reticulum. It localises to the endoplasmic reticulum membrane. It participates in protein modification; protein glycosylation. In terms of biological role, subunit of the oligosaccharyl transferase (OST) complex that catalyzes the initial transfer of a defined glycan (Glc(3)Man(9)GlcNAc(2) in eukaryotes) from the lipid carrier dolichol-pyrophosphate to an asparagine residue within an Asn-X-Ser/Thr consensus motif in nascent polypeptide chains, the first step in protein N-glycosylation. N-glycosylation occurs cotranslationally and the complex associates with the Sec61 complex at the channel-forming translocon complex that mediates protein translocation across the endoplasmic reticulum (ER). All subunits are required for a maximal enzyme activity. This Mus musculus (Mouse) protein is Dolichyl-diphosphooligosaccharide--protein glycosyltransferase subunit 2.